Consider the following 878-residue polypeptide: Valine--tRNA ligase (878 aa).

Positions 43 to 53 match the 'HIGH' region motif; sequence PYPTGRLHLGH. Residues 527-531 carry the 'KMSKS' region motif; that stretch reads KMSKS. Position 530 (lysine 530) interacts with ATP.

The protein belongs to the class-I aminoacyl-tRNA synthetase family. ValS type 2 subfamily.

It localises to the cytoplasm. The enzyme catalyses tRNA(Val) + L-valine + ATP = L-valyl-tRNA(Val) + AMP + diphosphate. In terms of biological role, catalyzes the attachment of valine to tRNA(Val). As ValRS can inadvertently accommodate and process structurally similar amino acids such as threonine, to avoid such errors, it has a 'posttransfer' editing activity that hydrolyzes mischarged Thr-tRNA(Val) in a tRNA-dependent manner. In Methanocaldococcus jannaschii (strain ATCC 43067 / DSM 2661 / JAL-1 / JCM 10045 / NBRC 100440) (Methanococcus jannaschii), this protein is Valine--tRNA ligase.